Consider the following 620-residue polypeptide: Methionine--tRNA ligase (620 aa).

A 'HIGH' region motif is present at residues Pro-11–His-21. Cys-143, Cys-146, Cys-156, and Cys-159 together coordinate Zn(2+). Positions Lys-347–Ser-351 match the 'KMSKS' region motif. Ser-350 is an ATP binding site.

It belongs to the class-I aminoacyl-tRNA synthetase family. MetG type 1 subfamily. Monomer. It depends on Zn(2+) as a cofactor.

The protein localises to the cytoplasm. The catalysed reaction is tRNA(Met) + L-methionine + ATP = L-methionyl-tRNA(Met) + AMP + diphosphate. Its function is as follows. Is required not only for elongation of protein synthesis but also for the initiation of all mRNA translation through initiator tRNA(fMet) aminoacylation. The protein is Methionine--tRNA ligase of Bifidobacterium adolescentis (strain ATCC 15703 / DSM 20083 / NCTC 11814 / E194a).